A 437-amino-acid chain; its full sequence is Succinyl-CoA:cyclohexane-1-carboxylate CoA transferase (437 aa).

221-225 (GWGGI) is a binding site for CoA. Residue Glu-244 is the 5-glutamyl coenzyme A thioester intermediate of the active site. CoA is bound by residues Leu-319, Gly-342, and Lys-367.

It belongs to the acetyl-CoA hydrolase/transferase family. Homodimer.

The catalysed reaction is cyclohexane-1-carboxylate + succinyl-CoA = cyclohexane-1-carbonyl-CoA + succinate. The enzyme catalyses cyclohexane-1-carboxylate + butanoyl-CoA = cyclohexane-1-carbonyl-CoA + butanoate. Acyl-CoA transferase involved in the anaerobic degradation of cyclohexane carboxylic acid (CHC). Catalyzes the activation of CHC to cyclohexane-1-carbonyl-CoA (CHCoA). Benzoic acid and cyclohex-1-ene-1-carboxylic acid can also be used as substrates, but with lower specific activity. Shows highest activity with succinyl-CoA and butanoyl-coA as a CoA donor, and lower activity with crotonyl-CoA, acetyl-CoA, glutaryl-CoA, CH1eneCoA, propionyl-CoA and acetoacetyl-CoA. In vitro, the enzyme can use butanoyl-coA as a CoA donor with greater efficiency than succinyl-CoA. However, succinyl-CoA is the most abundant CoA ester in exponentially grown cells, whereas butanoyl-coA is hardly detectable, indicating that succinyl-CoA is the natural CoA donor for CHC activation. This chain is Succinyl-CoA:cyclohexane-1-carboxylate CoA transferase, found in Geobacter metallireducens (strain ATCC 53774 / DSM 7210 / GS-15).